Consider the following 205-residue polypeptide: Probable 3'-5' exonuclease KapD (205 aa).

The 168-residue stretch at 6-173 (LLIIDFEFTM…DDALTAYKLF (168 aa)) folds into the Exonuclease domain. Asp-10, Glu-12, and Asp-104 together coordinate Mg(2+). Glu-12 functions as the Proton acceptor in the catalytic mechanism. Glu-12 contributes to the AMP binding site. Residue His-160 is the Proton acceptor of the active site. An AMP-binding site is contributed by His-160. Residue Asp-165 coordinates Mg(2+).

It depends on Mg(2+) as a cofactor.

Functionally, specifically inhibits the KinA pathway to sporulation. This is Probable 3'-5' exonuclease KapD (kapD) from Bacillus subtilis (strain 168).